Reading from the N-terminus, the 77-residue chain is Acyl carrier protein (77 aa).

The Carrier domain occupies 2 to 77 (SDVADRVKKI…DAVKFISEAS (76 aa)). Serine 37 is modified (O-(pantetheine 4'-phosphoryl)serine).

It belongs to the acyl carrier protein (ACP) family. 4'-phosphopantetheine is transferred from CoA to a specific serine of apo-ACP by AcpS. This modification is essential for activity because fatty acids are bound in thioester linkage to the sulfhydryl of the prosthetic group.

The protein resides in the cytoplasm. It participates in lipid metabolism; fatty acid biosynthesis. In terms of biological role, carrier of the growing fatty acid chain in fatty acid biosynthesis. In Ruegeria sp. (strain TM1040) (Silicibacter sp.), this protein is Acyl carrier protein.